The chain runs to 83 residues: UPF0297 protein CLK_1948 (83 aa).

It belongs to the UPF0297 family.

This is UPF0297 protein CLK_1948 from Clostridium botulinum (strain Loch Maree / Type A3).